The following is a 290-amino-acid chain: Protease HtpX (290 aa).

Transmembrane regions (helical) follow at residues 4–24 and 36–56; these read IMLF…TLKL and GSLL…SLFI. H142 provides a ligand contact to Zn(2+). The active site involves E143. H146 is a binding site for Zn(2+). 2 helical membrane-spanning segments follow: residues 150-170 and 193-213; these read GDMV…MFFA and FIAT…IVMW. E219 is a binding site for Zn(2+).

It belongs to the peptidase M48B family. Zn(2+) is required as a cofactor.

It is found in the cell inner membrane. The polypeptide is Protease HtpX (Ectopseudomonas mendocina (strain ymp) (Pseudomonas mendocina)).